A 70-amino-acid polypeptide reads, in one-letter code: DNA-directed RNA polymerase subunit epsilon (70 aa).

It belongs to the RNA polymerase subunit epsilon family. As to quaternary structure, RNAP is composed of a core of 2 alpha, a beta and a beta' subunit. The core is associated with a delta subunit, and at least one of epsilon or omega. When a sigma factor is associated with the core the holoenzyme is formed, which can initiate transcription.

It carries out the reaction RNA(n) + a ribonucleoside 5'-triphosphate = RNA(n+1) + diphosphate. Its function is as follows. A non-essential component of RNA polymerase (RNAP). The chain is DNA-directed RNA polymerase subunit epsilon from Bacillus cereus (strain ATCC 14579 / DSM 31 / CCUG 7414 / JCM 2152 / NBRC 15305 / NCIMB 9373 / NCTC 2599 / NRRL B-3711).